A 498-amino-acid chain; its full sequence is NADH-quinone oxidoreductase subunit N 2 (498 aa).

A run of 14 helical transmembrane segments spans residues V19–F39, I47–W67, Y83–L103, S114–A134, L136–F156, L171–A191, I215–A235, P249–L269, I282–A302, I317–A337, V345–A365, L389–F409, W420–F440, and A468–I488.

It belongs to the complex I subunit 2 family. NDH-1 is composed of 14 different subunits. Subunits NuoA, H, J, K, L, M, N constitute the membrane sector of the complex.

The protein resides in the cell membrane. It catalyses the reaction a quinone + NADH + 5 H(+)(in) = a quinol + NAD(+) + 4 H(+)(out). Functionally, NDH-1 shuttles electrons from NADH, via FMN and iron-sulfur (Fe-S) centers, to quinones in the respiratory chain. The immediate electron acceptor for the enzyme in this species is believed to be ubiquinone. Couples the redox reaction to proton translocation (for every two electrons transferred, four hydrogen ions are translocated across the cytoplasmic membrane), and thus conserves the redox energy in a proton gradient. The polypeptide is NADH-quinone oxidoreductase subunit N 2 (Roseiflexus castenholzii (strain DSM 13941 / HLO8)).